We begin with the raw amino-acid sequence, 271 residues long: Putative phosphoenolpyruvate synthase regulatory protein (271 aa).

151–158 provides a ligand contact to ADP; the sequence is GVSRSGKT.

This sequence belongs to the pyruvate, phosphate/water dikinase regulatory protein family. PSRP subfamily.

The enzyme catalyses [pyruvate, water dikinase] + ADP = [pyruvate, water dikinase]-phosphate + AMP + H(+). It catalyses the reaction [pyruvate, water dikinase]-phosphate + phosphate + H(+) = [pyruvate, water dikinase] + diphosphate. Its function is as follows. Bifunctional serine/threonine kinase and phosphorylase involved in the regulation of the phosphoenolpyruvate synthase (PEPS) by catalyzing its phosphorylation/dephosphorylation. In Burkholderia orbicola (strain MC0-3), this protein is Putative phosphoenolpyruvate synthase regulatory protein.